A 252-amino-acid polypeptide reads, in one-letter code: Protein IRON-RELATED TRANSCRIPTION FACTOR 3 (252 aa).

A basic motif region spans residues 36 to 49 (PRKVHKSEREKLKR). In terms of domain architecture, bHLH spans 36-86 (PRKVHKSEREKLKRGHLNDLFGELGNMLEADRQSNGKACILTDTTRILRDL). The tract at residues 50-86 (GHLNDLFGELGNMLEADRQSNGKACILTDTTRILRDL) is helix-loop-helix motif. The stretch at 76–131 (LTDTTRILRDLLSQVKSLRQENSTLQNESNYVTMERNELQDENGALRSEISDLQNE) forms a coiled coil. The disordered stretch occupies residues 135-252 (RATGSPGWGH…GLPRMEDEQM (118 aa)). The segment covering 162–176 (PSQQPMQPSPMTTST) has biased composition (low complexity). The segment covering 208 to 219 (PAEDPEPSEDQE) has biased composition (acidic residues).

Belongs to the bHLH protein family.

Its subcellular location is the nucleus. Transcription factor that acts as a negative regulator of the iron deficiency response. Suppresses the induction of iron deficiency responsive genes, such as NAS1, NAS2, IRO2, IRT1, YSL15, and NRAMP1. The protein is Protein IRON-RELATED TRANSCRIPTION FACTOR 3 of Oryza sativa subsp. japonica (Rice).